A 146-amino-acid polypeptide reads, in one-letter code: Aspartate 1-decarboxylase (146 aa).

S25 functions as the Schiff-base intermediate with substrate; via pyruvic acid in the catalytic mechanism. S25 is modified (pyruvic acid (Ser)). Position 57 (T57) interacts with substrate. The active-site Proton donor is the Y58. 73–75 serves as a coordination point for substrate; sequence GPA.

Belongs to the PanD family. In terms of assembly, heterooctamer of four alpha and four beta subunits. Pyruvate is required as a cofactor. Is synthesized initially as an inactive proenzyme, which is activated by self-cleavage at a specific serine bond to produce a beta-subunit with a hydroxyl group at its C-terminus and an alpha-subunit with a pyruvoyl group at its N-terminus.

The protein resides in the cytoplasm. The catalysed reaction is L-aspartate + H(+) = beta-alanine + CO2. It functions in the pathway cofactor biosynthesis; (R)-pantothenate biosynthesis; beta-alanine from L-aspartate: step 1/1. Its function is as follows. Catalyzes the pyruvoyl-dependent decarboxylation of aspartate to produce beta-alanine. The chain is Aspartate 1-decarboxylase from Salinibacter ruber (strain DSM 13855 / M31).